The primary structure comprises 106 residues: Pyrimidine/purine nucleoside phosphorylase (106 aa).

Belongs to the nucleoside phosphorylase PpnP family.

It catalyses the reaction a purine D-ribonucleoside + phosphate = a purine nucleobase + alpha-D-ribose 1-phosphate. It carries out the reaction adenosine + phosphate = alpha-D-ribose 1-phosphate + adenine. The enzyme catalyses cytidine + phosphate = cytosine + alpha-D-ribose 1-phosphate. The catalysed reaction is guanosine + phosphate = alpha-D-ribose 1-phosphate + guanine. It catalyses the reaction inosine + phosphate = alpha-D-ribose 1-phosphate + hypoxanthine. It carries out the reaction thymidine + phosphate = 2-deoxy-alpha-D-ribose 1-phosphate + thymine. The enzyme catalyses uridine + phosphate = alpha-D-ribose 1-phosphate + uracil. The catalysed reaction is xanthosine + phosphate = alpha-D-ribose 1-phosphate + xanthine. Its function is as follows. Catalyzes the phosphorolysis of diverse nucleosides, yielding D-ribose 1-phosphate and the respective free bases. Can use uridine, adenosine, guanosine, cytidine, thymidine, inosine and xanthosine as substrates. Also catalyzes the reverse reactions. This chain is Pyrimidine/purine nucleoside phosphorylase, found in Paraburkholderia xenovorans (strain LB400).